The following is a 239-amino-acid chain: Ribosomal RNA small subunit methyltransferase G (239 aa).

Residues G77, F82, 128–129, and R146 each bind S-adenosyl-L-methionine; that span reads AE. Positions 215-239 are disordered; the sequence is DKRSQTPKKYPRKPGTPNKSPLLEK.

The protein belongs to the methyltransferase superfamily. RNA methyltransferase RsmG family.

The protein localises to the cytoplasm. In terms of biological role, specifically methylates the N7 position of guanine in position 535 of 16S rRNA. The chain is Ribosomal RNA small subunit methyltransferase G from Staphylococcus saprophyticus subsp. saprophyticus (strain ATCC 15305 / DSM 20229 / NCIMB 8711 / NCTC 7292 / S-41).